The primary structure comprises 309 residues: HPr kinase/phosphorylase (309 aa).

Active-site residues include His138 and Lys159. 153–160 (GDSGIGKS) is a binding site for ATP. Residue Ser160 coordinates Mg(2+). Residue Asp177 is the Proton acceptor; for phosphorylation activity. Proton donor; for dephosphorylation activity of the active site. Positions 201 to 210 (LEIRGVGIID) are important for the catalytic mechanism of both phosphorylation and dephosphorylation. Glu202 serves as a coordination point for Mg(2+). Arg243 is a catalytic residue. The tract at residues 264-269 (PVKTGR) is important for the catalytic mechanism of dephosphorylation.

It belongs to the HPrK/P family. Homohexamer. The cofactor is Mg(2+).

It carries out the reaction [HPr protein]-L-serine + ATP = [HPr protein]-O-phospho-L-serine + ADP + H(+). The enzyme catalyses [HPr protein]-O-phospho-L-serine + phosphate + H(+) = [HPr protein]-L-serine + diphosphate. Its function is as follows. Catalyzes the ATP- as well as the pyrophosphate-dependent phosphorylation of a specific serine residue in HPr, a phosphocarrier protein of the phosphoenolpyruvate-dependent sugar phosphotransferase system (PTS). HprK/P also catalyzes the pyrophosphate-producing, inorganic phosphate-dependent dephosphorylation (phosphorolysis) of seryl-phosphorylated HPr (P-Ser-HPr). The two antagonistic activities of HprK/P are regulated by several intracellular metabolites, which change their concentration in response to the absence or presence of rapidly metabolisable carbon sources (glucose, fructose, etc.) in the growth medium. Therefore, by controlling the phosphorylation state of HPr, HPrK/P is a sensor enzyme that plays a major role in the regulation of carbon metabolism and sugar transport: it mediates carbon catabolite repression (CCR), and regulates PTS-catalyzed carbohydrate uptake and inducer exclusion. In Streptococcus thermophilus (strain ATCC BAA-491 / LMD-9), this protein is HPr kinase/phosphorylase.